Here is a 431-residue protein sequence, read N- to C-terminus: O-methyltransferase gliM (431 aa).

Residues 20–85 (EFKAIVNDLR…SMDKLQLQLV (66 aa)) are a coiled coil. S-adenosyl-L-methionine-binding positions include Asp287 and 319–321 (GDF). His338 functions as the Proton acceptor in the catalytic mechanism.

It belongs to the class I-like SAM-binding methyltransferase superfamily. Cation-independent O-methyltransferase family. COMT subfamily.

The protein operates within mycotoxin biosynthesis. Functionally, O-methyltransferase; part of the gene cluster that mediates the biosynthesis of gliotoxin, a member of the epipolythiodioxopiperazine (ETP) class of toxins characterized by a disulfide bridged cyclic dipeptide. The first step in gliotoxin biosynthesis is the condensation of serine and phenylalanine to form the cyclo-L-phenylalanyl-L-serine diketopiperazine (DKP) by the NRPS gliP. GliP is also able to produce the DKP cyclo-L-tryptophanyl-L-serine, suggesting that the substrate specificity of the first adenylation (A) domain in gliP is sufficiently relaxed to accommodate both L-Phe and L-Trp. The cytochrome P450 monooxygenase gliC has been shown to catalyze the subsequent hydroxylation of the alpha-carbon of L-Phe in cyclo-L-phenylalanyl-L-serine whereas the second cytochrome P450 enzyme, gliF, is presumably involved in the modification of the DKP side chain. The glutathione S-transferase (GST) gliG then forms a bis-glutathionylated biosynthetic intermediate which is responsible for the sulfurization of gliotoxin. This bis-glutathionylated intermediate is subsequently processed by the gamma-glutamyl cyclotransferase gliK to remove both gamma-glutamyl moieties. Subsequent processing via gliI yields a biosynthetic intermediate, which is N-methylated via the N-methyltransferase gliN, before the gliotoxin oxidoreductase gliT-mediated disulfide bridge closure. GliN-mediated amide methylation confers stability to ETP, damping the spontaneous formation of tri- and tetrasulfides. Intracellular dithiol gliotoxin oxidized by gliT is subsequently effluxed by gliA. Gliotoxin contributes to pathogenesis during invasive aspergillosis. In macrophages and neutrophils, gliotoxin showed inhibition of various different cell functions including cytokine production, antigen presentation, phagocytosis, and production of reactive oxygen species. The protein is O-methyltransferase gliM of Aspergillus fumigatus (strain ATCC MYA-4609 / CBS 101355 / FGSC A1100 / Af293) (Neosartorya fumigata).